The primary structure comprises 208 residues: Protein-L-isoaspartate O-methyltransferase (208 aa).

The active site involves Ser-59.

It belongs to the methyltransferase superfamily. L-isoaspartyl/D-aspartyl protein methyltransferase family.

It localises to the cytoplasm. It carries out the reaction [protein]-L-isoaspartate + S-adenosyl-L-methionine = [protein]-L-isoaspartate alpha-methyl ester + S-adenosyl-L-homocysteine. In terms of biological role, catalyzes the methyl esterification of L-isoaspartyl residues in peptides and proteins that result from spontaneous decomposition of normal L-aspartyl and L-asparaginyl residues. It plays a role in the repair and/or degradation of damaged proteins. This is Protein-L-isoaspartate O-methyltransferase from Serratia proteamaculans (strain 568).